The following is an 874-amino-acid chain: Bifunctional uridylyltransferase/uridylyl-removing enzyme (874 aa).

The interval 1–332 (MPLQSPLTFS…NGGATENAEI (332 aa)) is uridylyltransferase. The interval 333–692 (LDADFQRRGS…ISKKATRGGT (360 aa)) is uridylyl-removing. Positions 451–573 (VDEHSIRLLK…VRDEESLEYL (123 aa)) constitute an HD domain. ACT domains follow at residues 693 to 777 (EVFV…RTPN) and 800 to 874 (LMEF…AVTA).

It belongs to the GlnD family. Mg(2+) serves as cofactor.

The catalysed reaction is [protein-PII]-L-tyrosine + UTP = [protein-PII]-uridylyl-L-tyrosine + diphosphate. It carries out the reaction [protein-PII]-uridylyl-L-tyrosine + H2O = [protein-PII]-L-tyrosine + UMP + H(+). Uridylyltransferase (UTase) activity is inhibited by glutamine, while glutamine activates uridylyl-removing (UR) activity. Functionally, modifies, by uridylylation and deuridylylation, the PII regulatory proteins (GlnB and homologs), in response to the nitrogen status of the cell that GlnD senses through the glutamine level. Under low glutamine levels, catalyzes the conversion of the PII proteins and UTP to PII-UMP and PPi, while under higher glutamine levels, GlnD hydrolyzes PII-UMP to PII and UMP (deuridylylation). Thus, controls uridylylation state and activity of the PII proteins, and plays an important role in the regulation of nitrogen assimilation and metabolism. This is Bifunctional uridylyltransferase/uridylyl-removing enzyme from Vibrio parahaemolyticus serotype O3:K6 (strain RIMD 2210633).